The sequence spans 645 residues: Bifurcating [FeFe] hydrogenase alpha subunit (645 aa).

The 2Fe-2S ferredoxin-type domain occupies 1–76 (MKIYVDGREV…GMKVKTNTPE (76 aa)). Residues Cys-34, Cys-45, Cys-48, and Cys-60 each coordinate [2Fe-2S] cluster. The 4Fe-4S His(Cys)3-ligated-type domain occupies 76–115 (EIYEMRRNILELILATHNRDCTTCDRNGSCKLQKYAEDFG). The [4Fe-4S] cluster site is built by His-92, Cys-96, Cys-99, Cys-105, Cys-143, Cys-146, Cys-149, Cys-153, Cys-186, Cys-189, Cys-192, Cys-196, Cys-295, Cys-350, Cys-482, and Cys-486. 4Fe-4S ferredoxin-type domains are found at residues 133–164 (SAPV…VIEF) and 178–206 (DTPL…IRND). Cys-486 contributes to the Fe(2+) binding site. Cys-575, Cys-580, Cys-612, and Cys-616 together coordinate [2Fe-2S] cluster.

As to quaternary structure, heterotrimer composed of HydA (alpha subunit), HydB (beta subunit) and HydC (gamma subunit). Near neutral and acidic pH conditions favor oligomerization of the heterotrimeric holoenzyme. [2Fe-2S] cluster is required as a cofactor. Requires [4Fe-4S] cluster as cofactor. It depends on Fe(2+) as a cofactor.

It localises to the cytoplasm. The catalysed reaction is 2 H2 + 2 oxidized [2Fe-2S]-[ferredoxin] + NAD(+) = 2 reduced [2Fe-2S]-[ferredoxin] + NADH + 3 H(+). Catalyzes the oxidation of the physiological electron carriers NADH and reduced ferredoxin, coupled to the production of H(2). Acts as a bifurcating [FeFe] hydrogenase, which uses the exergonic oxidation of reduced ferredoxin to drive the unfavorable oxidation of NADH to produce H(2). The alpha subunit contains the catalytic H-cluster. This Thermotoga maritima (strain ATCC 43589 / DSM 3109 / JCM 10099 / NBRC 100826 / MSB8) protein is Bifurcating [FeFe] hydrogenase alpha subunit.